The sequence spans 147 residues: Protein phosphatase 1 regulatory subunit 14B (147 aa).

The interval 1 to 55 (MADSGTAGGAALAAPAPGPGSGGPGPRVYFQSPPGAAGEGPGGADDEGPVRRQGK) is disordered. An N-acetylalanine modification is found at Ala2. Phosphoserine is present on Ser21. A Phosphotyrosine modification is found at Tyr29. Phosphoserine is present on Ser32. Thr57 carries the post-translational modification Phosphothreonine. The stretch at 61–103 (DRKELRKRLNLEEWILEQLTRLYDCQEEEIPELEIDVDELLDM) forms a coiled coil.

The protein belongs to the PP1 inhibitor family. In terms of processing, phosphorylated primarily on Thr-57 by PKC (in vitro). An unknown Ser is also phosphorylated by PKC (in vitro). Ubiquitous. Expressed at low levels.

It localises to the cytoplasm. In terms of biological role, inhibitor of PPP1CA. Has over 50-fold higher inhibitory activity when phosphorylated. This is Protein phosphatase 1 regulatory subunit 14B (PPP1R14B) from Homo sapiens (Human).